Consider the following 59-residue polypeptide: Single-pass membrane and coiled-coil domain-containing protein 4 homolog (59 aa).

Positions 1–11 (MAGRNKAKPRL) are enriched in basic residues. Residues 1–20 (MAGRNKAKPRLSKKEKEERR) are disordered. Positions 10-30 (RLSKKEKEERRKDMAEVQEKV) form a coiled coil. The helical transmembrane segment at 30 to 50 (VFSVVVPVVVAFTVVIMLIVY) threads the bilayer.

This sequence belongs to the SMCO4 family.

It is found in the membrane. This Argas monolakensis (Mono lake bird tick) protein is Single-pass membrane and coiled-coil domain-containing protein 4 homolog.